We begin with the raw amino-acid sequence, 313 residues long: Serine/threonine-protein phosphatase PP2A-4 catalytic subunit (313 aa).

4 residues coordinate Mn(2+): D61, H63, D89, and N121. H122 acts as the Proton donor in catalysis. H171 and H245 together coordinate Mn(2+). L313 is modified (leucine methyl ester).

The protein belongs to the PPP phosphatase family. PP-2A subfamily. In terms of assembly, PP2A consists of a common heterodimeric core enzyme, composed of a 36 kDa catalytic subunit (subunit C) and a 65 kDa constant regulatory subunit (subunit A), that associates with a variety of regulatory subunits such as subunits B (the R2/B/PR55/B55, R3/B''/PR72/PR130/PR59 and R5/B'/B56 families). Interacts with SIC/RON3. The cofactor is Mn(2+). Reversibly methyl esterified on Leu-313 by leucine carboxyl methyltransferase 1 (LCMT1) and pectin methylesterase 1 (PME1). Carboxyl methylation influences the affinity of the catalytic subunit for the different regulatory subunits, thereby modulating the PP2A holoenzyme's substrate specificity, enzyme activity and cellular localization. In terms of processing, phosphorylation of either threonine (by autophosphorylation-activated protein kinase) or tyrosine results in inactivation of the phosphatase. Auto-dephosphorylation has been suggested as a mechanism for reactivation.

It localises to the cytoplasm. It carries out the reaction O-phospho-L-seryl-[protein] + H2O = L-seryl-[protein] + phosphate. It catalyses the reaction O-phospho-L-threonyl-[protein] + H2O = L-threonyl-[protein] + phosphate. Functions redundantly with PP2A3, and is involved in establishing auxin gradients, apical-basal axis of polarity and root and shoot apical meristem during embryogenesis. May dephosphorylate PIN1 and regulate its subcellular distribution for polar auxin transport. The holoenzyme composed of PP2AA1, PP2A4 and B'ZETA or B'ETA acts as a negative regulator of plant innate immunity by controlling BAK1 phosphorylation state and activation in surface-localized immune receptor complexes. In Arabidopsis thaliana (Mouse-ear cress), this protein is Serine/threonine-protein phosphatase PP2A-4 catalytic subunit.